The chain runs to 161 residues: Protein OPG060 (161 aa).

This sequence belongs to the orthopoxvirus OPG058 family.

This is Protein OPG060 (OPG060) from Homo sapiens (Human).